The sequence spans 268 residues: Type-5 uracil-DNA glycosylase (268 aa).

The segment at 1 to 29 (MHPKTGRAFRSPVEPGSGWPGDPATPQTP) is disordered. Residues cysteine 57, cysteine 60, cysteine 161, and cysteine 176 each coordinate [4Fe-4S] cluster.

This sequence belongs to the uracil-DNA glycosylase (UDG) superfamily. Type 5 (UDGb) family.

In terms of biological role, DNA glycosylase with broad substrate specificity. This chain is Type-5 uracil-DNA glycosylase, found in Mycobacterium bovis (strain ATCC BAA-935 / AF2122/97).